A 621-amino-acid polypeptide reads, in one-letter code: Chaperone protein HtpG (621 aa).

The tract at residues 1-341 (MSNQEYTFQT…SEDLPLNVSR (341 aa)) is a; substrate-binding. A b region spans residues 342–547 (EILQQNKILA…GDEPNAMMAN (206 aa)). Positions 548–621 (WMRQMGQSVP…RLNSVLLKAL (74 aa)) are c.

The protein belongs to the heat shock protein 90 family. In terms of assembly, homodimer.

The protein localises to the cytoplasm. Its function is as follows. Molecular chaperone. Has ATPase activity. In Helicobacter pylori (strain J99 / ATCC 700824) (Campylobacter pylori J99), this protein is Chaperone protein HtpG.